The following is a 594-amino-acid chain: UvrABC system protein C (594 aa).

The GIY-YIG domain occupies 13 to 99; that stretch reads NSSGVYQYFD…IKQLKPKYNI (87 aa). Positions 205 to 240 constitute a UVR domain; it reads DRLIKELELKMERLSSKLRFEEALIYRDRIAKIQKI.

It belongs to the UvrC family. In terms of assembly, interacts with UvrB in an incision complex.

Its subcellular location is the cytoplasm. Its function is as follows. The UvrABC repair system catalyzes the recognition and processing of DNA lesions. UvrC both incises the 5' and 3' sides of the lesion. The N-terminal half is responsible for the 3' incision and the C-terminal half is responsible for the 5' incision. The sequence is that of UvrABC system protein C from Helicobacter pylori (strain P12).